The primary structure comprises 382 residues: Fimbrial usher domain-containing protein YdeT (382 aa).

In Escherichia coli (strain K12), this protein is Fimbrial usher domain-containing protein YdeT (ydeT).